Reading from the N-terminus, the 84-residue chain is uncharacterized protein (84 aa).

Residues 8-47 (CECCDRDLPPDSGDAMICTFECTFCAGCAETKLGGTCPNC) are cysteine motif.

This is an uncharacterized protein from Rhizobium meliloti (strain 1021) (Ensifer meliloti).